The following is a 633-amino-acid chain: tRNA uridine 5-carboxymethylaminomethyl modification enzyme MnmG (633 aa).

FAD is bound by residues G15 to G20, V127, and S182. G276 to F290 contacts NAD(+). Position 373 (Q373) interacts with FAD.

This sequence belongs to the MnmG family. In terms of assembly, homodimer. Heterotetramer of two MnmE and two MnmG subunits. Requires FAD as cofactor.

It is found in the cytoplasm. Its function is as follows. NAD-binding protein involved in the addition of a carboxymethylaminomethyl (cmnm) group at the wobble position (U34) of certain tRNAs, forming tRNA-cmnm(5)s(2)U34. The polypeptide is tRNA uridine 5-carboxymethylaminomethyl modification enzyme MnmG (Streptococcus thermophilus (strain CNRZ 1066)).